An 874-amino-acid polypeptide reads, in one-letter code: Protein translocase subunit SecA (874 aa).

Residues Q87, 105 to 109 (GEGKT), and D512 contribute to the ATP site. Zn(2+)-binding residues include C859, C861, C870, and H871.

Belongs to the SecA family. In terms of assembly, monomer and homodimer. Part of the essential Sec protein translocation apparatus which comprises SecA, SecYEG and auxiliary proteins SecDF-YajC and YidC. It depends on Zn(2+) as a cofactor.

It is found in the cell inner membrane. It localises to the cytoplasm. The catalysed reaction is ATP + H2O + cellular proteinSide 1 = ADP + phosphate + cellular proteinSide 2.. In terms of biological role, part of the Sec protein translocase complex. Interacts with the SecYEG preprotein conducting channel. Has a central role in coupling the hydrolysis of ATP to the transfer of proteins into and across the cell membrane, serving both as a receptor for the preprotein-SecB complex and as an ATP-driven molecular motor driving the stepwise translocation of polypeptide chains across the membrane. The protein is Protein translocase subunit SecA of Buchnera aphidicola subsp. Schizaphis graminum (strain Sg).